Reading from the N-terminus, the 283-residue chain is MAPSPSKRKERSEDKAKERGKEKAPGKEATDKDRGRDKAKKRRSASSGSSSSSRSRSSSSSSSSSGSSSGSSSGSSSSASSRSGSSSSSRSSSSSSSSGSPSPSRRRHDNRRRSRSKSKQPKRDEKERKRRSPSPRPTKVHIGRLTRNVTKDHILEIFSTYGKIKMIDMPVDRYHPHLSKGYAYVEFEAPEEAEKALKHMDGGQIDGQEITASAVLTPWPMRAMPRRFSPPRRMLPPPPMWRRSPPRMRRRSRSPRRRSPVRRRSRSPARRRHRSRSSSNSSR.

2 disordered regions span residues 1 to 140 and 223 to 283; these read MAPS…PTKV and AMPR…NSSR. Over residues 10 to 36 the composition is skewed to basic and acidic residues; it reads ERSEDKAKERGKEKAPGKEATDKDRGR. The segment covering 45-103 has biased composition (low complexity); sequence ASSGSSSSSRSRSSSSSSSSSGSSSGSSSGSSSSASSRSGSSSSSRSSSSSSSSGSPSP. Composition is skewed to basic residues over residues 104 to 120 and 128 to 140; these read SRRR…KSKQ and RKRR…PTKV. In terms of domain architecture, RRM spans 161–240; that stretch reads YGKIKMIDMP…PRRMLPPPPM (80 aa). The span at 244–276 shows a compositional bias: basic residues; sequence SPPRMRRRSRSPRRRSPVRRRSRSPARRRHRSR.

Belongs to the splicing factor SR family. In terms of assembly, component of the active spliceosome.

It localises to the nucleus. Its subcellular location is the nucleus speckle. The protein resides in the cytoplasm. Its function is as follows. Component of a splicing-dependent multiprotein exon junction complex (EJC) deposited at splice junction on mRNAs. The EJC is a dynamic structure consisting of a few core proteins and several more peripheral nuclear and cytoplasmic associated factors that join the complex only transiently either during EJC assembly or during subsequent mRNA metabolism. Putative component of the spliceosome which enhances the formation of the ATP-dependent A complex of the spliceosome. May participate in mRNA 3'-end cleavage. Also mediates increase of mRNA abundance and translational efficiency. In Xenopus laevis (African clawed frog), this protein is RNA-binding protein with serine-rich domain 1-B (rnps1-b).